The following is a 274-amino-acid chain: Phloretin hydrolase (274 aa).

The Zn(2+) site is built by histidine 123, glutamate 154, histidine 251, and glutamate 255.

This sequence belongs to the DAPG/phloretin hydrolase family. In terms of assembly, homodimer. It depends on Zn(2+) as a cofactor.

The protein resides in the cytoplasm. It carries out the reaction phloretin + H2O = phloretate + 1,3,5-trihydroxybenzene + H(+). In terms of biological role, catalyzes the hydrolytic C-C cleavage of phloretin to phloroglucinol and 3-(4-hydroxyphenyl)propionic acid during flavonoid degradation. Also hydrolyzes other C-acylated phenols. This chain is Phloretin hydrolase (phy), found in Eubacterium ramulus.